Here is a 218-residue protein sequence, read N- to C-terminus: Cytochrome b6 (218 aa).

Residues 35–55 (IFYCLGGITLVCFLIQFATGF) form a helical membrane-spanning segment. Position 38 (C38) interacts with heme c. Heme b is bound by residues H89 and H103. 3 helical membrane passes run 93 to 113 (ASMMVLMLILHVFRVYLTGGF), 119 to 139 (LTWVTGVTMAVITVSFGVTGY), and 189 to 209 (LHTFVMPWLLAVFMLMHFLMI). Heme b contacts are provided by H190 and H205.

It belongs to the cytochrome b family. PetB subfamily. In terms of assembly, the 4 large subunits of the cytochrome b6-f complex are cytochrome b6, subunit IV (17 kDa polypeptide, PetD), cytochrome f and the Rieske protein, while the 4 small subunits are PetG, PetL, PetM and PetN. The complex functions as a dimer. Requires heme b as cofactor. The cofactor is heme c.

It is found in the cellular thylakoid membrane. Its function is as follows. Component of the cytochrome b6-f complex, which mediates electron transfer between photosystem II (PSII) and photosystem I (PSI), cyclic electron flow around PSI, and state transitions. In Synechococcus sp. (strain CC9311), this protein is Cytochrome b6.